A 616-amino-acid chain; its full sequence is D-glucuronyl C5-epimerase (616 aa).

Residues 1 to 12 (MKCLRWRSNRHR) are Cytoplasmic-facing. The chain crosses the membrane as a helical; Signal-anchor for type II membrane protein span at residues 13–29 (IYLLVACGALFLLNRHL). Topologically, residues 30 to 616 (TQEESRIDEE…YAYGKRAKHN (587 aa)) are extracellular. Substrate-binding positions include tyrosine 136, 141 to 143 (RDR), and glutamine 169. Asparagine 188, asparagine 232, asparagine 267, and asparagine 471 each carry an N-linked (GlcNAc...) asparagine glycan. Substrate is bound by residues tyrosine 504, arginine 562, and 574–580 (RWDYHAV).

It belongs to the D-glucuronyl C5-epimerase family. Homodimer. In terms of tissue distribution, expression in comma stage embryos is strong in the hypodermis and intestine and weaker in the head region. In late embryos, larval, and adult stages, expressed primarily in hypodermis and intestine.

It localises to the cell membrane. It is found in the secreted. Its subcellular location is the extracellular space. The protein resides in the extracellular matrix. The protein localises to the basement membrane. It carries out the reaction [heparosan-N-sulfate](n) = [heparan-N-sulfate](n). It functions in the pathway glycan metabolism; heparan sulfate biosynthesis. It participates in glycan metabolism; heparin biosynthesis. Functionally, converts D-glucuronic acid residues adjacent to N-sulfate sugar residues to L-iduronic acids. Plays a role in the early migration of AQR and PQR neurons, which descend from the Q neuroblasts. The polypeptide is D-glucuronyl C5-epimerase (hse-5) (Caenorhabditis elegans).